The sequence spans 178 residues: Interleukin-10 (178 aa).

The N-terminal stretch at 1–18 (MPSSALLYCLILLAGVRP) is a signal peptide. 2 disulfide bridges follow: Cys-30-Cys-126 and Cys-80-Cys-132. N-linked (GlcNAc...) asparagine glycosylation occurs at Asn-134.

The protein belongs to the IL-10 family. Homodimer. Interacts with IL10RA and IL10RB.

It localises to the secreted. Major immune regulatory cytokine that acts on many cells of the immune system where it has profound anti-inflammatory functions, limiting excessive tissue disruption caused by inflammation. Mechanistically, IL10 binds to its heterotetrameric receptor comprising IL10RA and IL10RB leading to JAK1 and STAT2-mediated phosphorylation of STAT3. In turn, STAT3 translocates to the nucleus where it drives expression of anti-inflammatory mediators. Targets antigen-presenting cells (APCs) such as macrophages and monocytes and inhibits their release of pro-inflammatory cytokines including granulocyte-macrophage colony-stimulating factor /GM-CSF, granulocyte colony-stimulating factor/G-CSF, IL-1 alpha, IL-1 beta, IL-6, IL-8 and TNF-alpha. Also interferes with antigen presentation by reducing the expression of MHC-class II and co-stimulatory molecules, thereby inhibiting their ability to induce T cell activation. In addition, controls the inflammatory response of macrophages by reprogramming essential metabolic pathways including mTOR signaling. The polypeptide is Interleukin-10 (IL10) (Meriones unguiculatus (Mongolian jird)).